The primary structure comprises 238 residues: MDIKLVYSTLDPVGVTIKKLGYRFEEINEDVTDFHYENGEAIVIFSRHESKAGIPSLTVHYPGNPSEEIMGGEPKKLGIAYPRLLTSILREIKKIDLNIEKTMEATHHGPTYQNVPVIFVEVGSNETYWTNDTIVKALVDSTIRSIDKVDEIDCEYYISGFGGPHYSRLFTKLADESCIGHVISKHYIDKLDDKVIIQTITNSVNTINKVVIDSLNSKQKERIIASLKKLNNINIEFR.

Belongs to the DtdA deacylase family. As to quaternary structure, monomer. Zn(2+) serves as cofactor.

The enzyme catalyses a D-aminoacyl-tRNA + H2O = a tRNA + a D-alpha-amino acid + H(+). It carries out the reaction glycyl-tRNA(Ala) + H2O = tRNA(Ala) + glycine + H(+). It catalyses the reaction D-tyrosyl-tRNA(Tyr) + H2O = D-tyrosine + tRNA(Tyr). D-aminoacyl-tRNA deacylase with broad substrate specificity. By recycling D-aminoacyl-tRNA to D-amino acids and free tRNA molecules, this enzyme counteracts the toxicity associated with the formation of D-aminoacyl-tRNA entities in vivo. Catalyzes the hydrolysis of D-tyrosyl-tRNA(Tyr). This Saccharolobus solfataricus (strain ATCC 35092 / DSM 1617 / JCM 11322 / P2) (Sulfolobus solfataricus) protein is D-aminoacyl-tRNA deacylase.